The primary structure comprises 628 residues: Chaperone protein HtpG (628 aa).

Positions 1–334 (MTTTDTASET…SEDLPLNLSR (334 aa)) are a; substrate-binding. The tract at residues 335–550 (EMLQNNPQLA…GFGPDRELEK (216 aa)) is b. The segment at 551-628 (MLARANKGAA…LVLRGLVAHG (78 aa)) is c.

This sequence belongs to the heat shock protein 90 family. Homodimer.

It is found in the cytoplasm. In terms of biological role, molecular chaperone. Has ATPase activity. This is Chaperone protein HtpG from Rhodopseudomonas palustris (strain BisB5).